The chain runs to 957 residues: Protein CRT10 (957 aa).

The interval 695 to 719 (NSTEEDDVNSDPENEESGSSLTSFQ) is disordered. Residues 697–710 (TEEDDVNSDPENEE) show a composition bias toward acidic residues. Ser704 is modified (phosphoserine).

Component of a cullin-RING ligase (CRL) composed of 4 subunits: the RING protein HRT1, the cullin RTT101, a linker protein MMS1, and the substrate receptor CRT10. Interacts with MMS1.

Its function is as follows. Substrate targeting component of a cullin-RING-based E3 ubiquitin-protein ligase complex RTT101(MMS1-CRT10). RTT101(MMS1-CRT10) may regulate nucleotide synthesis through transcriptional regulation of RNR genes encoding ribonucleotide reductases. In Saccharomyces cerevisiae (strain ATCC 204508 / S288c) (Baker's yeast), this protein is Protein CRT10 (CRT10).